We begin with the raw amino-acid sequence, 571 residues long: Urease subunit alpha (571 aa).

One can recognise a Urease domain in the interval 133-571; that stretch reads GGIDTHVHFV…LPLTQRYFLF (439 aa). Ni(2+) is bound by residues histidine 138, histidine 140, and lysine 221. Lysine 221 is subject to N6-carboxylysine. Histidine 223 contacts substrate. The Ni(2+) site is built by histidine 250 and histidine 276. The active-site Proton donor is histidine 324. Aspartate 364 provides a ligand contact to Ni(2+).

This sequence belongs to the metallo-dependent hydrolases superfamily. Urease alpha subunit family. In terms of assembly, heterotrimer of UreA (gamma), UreB (beta) and UreC (alpha) subunits. Three heterotrimers associate to form the active enzyme. Requires Ni cation as cofactor. Carboxylation allows a single lysine to coordinate two nickel ions.

Its subcellular location is the cytoplasm. The enzyme catalyses urea + 2 H2O + H(+) = hydrogencarbonate + 2 NH4(+). Its pathway is nitrogen metabolism; urea degradation; CO(2) and NH(3) from urea (urease route): step 1/1. The polypeptide is Urease subunit alpha (Staphylococcus xylosus).